Here is a 37-residue protein sequence, read N- to C-terminus: Beta-2-microglobulin (37 aa).

The Ig-like C1-type domain maps to 11–37 (GKEDVLICHVSNFHPPDITITLLKNGE).

Belongs to the beta-2-microglobulin family. As to quaternary structure, heterodimer of an alpha chain and a beta chain. Beta-2-microglobulin is the beta-chain of major histocompatibility complex class I molecules.

It localises to the secreted. Its function is as follows. Component of the class I major histocompatibility complex (MHC). Involved in the presentation of peptide antigens to the immune system. The sequence is that of Beta-2-microglobulin (b2m) from Oreochromis niloticus (Nile tilapia).